The primary structure comprises 710 residues: Probable thimet oligopeptidase (710 aa).

Histidine 502 provides a ligand contact to Zn(2+). Residue glutamate 503 is part of the active site. Histidine 506 is a binding site for Zn(2+).

This sequence belongs to the peptidase M3 family. Zn(2+) serves as cofactor.

Its subcellular location is the cytoplasm. It carries out the reaction Preferential cleavage of bonds with hydrophobic residues at P1, P2 and P3' and a small residue at P1' in substrates of 5 to 15 residues.. In terms of biological role, involved in cytoplasmic peptide degradation. This chain is Probable thimet oligopeptidase, found in Arabidopsis thaliana (Mouse-ear cress).